A 92-amino-acid chain; its full sequence is Protein S100-B (92 aa).

Blocked amino end (Ser); alternate is present on Ser2. The residue at position 2 (Ser2) is an N-acetylserine; alternate. EF-hand domains are found at residues 13 to 48 (DVFH…LEEI) and 49 to 84 (KEQE…VTTA). His16 lines the Zn(2+) pocket. Residues Ser19, Glu22, and Asp24 each coordinate Ca(2+). His26 contacts Zn(2+). Positions 27, 32, 62, 64, 66, 68, and 73 each coordinate Ca(2+). The Zn(2+) site is built by His86 and His91.

It belongs to the S-100 family. As to quaternary structure, dimer of either two alpha chains, or two beta chains, or one alpha and one beta chain. The S100B dimer binds two molecules of STK38. Interacts with CACYBP in a calcium-dependent manner. Interacts with ATAD3A; this interaction probably occurs in the cytosol prior to ATAD3A mitochondrial targeting. Interacts with S100A6. The S100B dimer interacts with two molecules of CAPZA1. Interacts with AGER. Interacts with PPP5C (via TPR repeats); the interaction is calcium-dependent and modulates PPP5C activity. Interacts with TPPP; this interaction inhibits TPPP dimerization. Interacts with isoform CLSTN3beta of CLSTN3; interaction promotes secretion. As to expression, although predominant among the water-soluble brain proteins, S100 is also found in a variety of other tissues.

The protein localises to the cytoplasm. The protein resides in the nucleus. It is found in the secreted. Its function is as follows. Small zinc- and- and calcium-binding protein that is highly expressed in astrocytes and constitutes one of the most abundant soluble proteins in brain. Weakly binds calcium but binds zinc very tightly-distinct binding sites with different affinities exist for both ions on each monomer. Physiological concentrations of potassium ion antagonize the binding of both divalent cations, especially affecting high-affinity calcium-binding sites. Acts as a neurotrophic factor that promotes astrocytosis and axonal proliferation. Involved in innervation of thermogenic adipose tissue by acting as an adipocyte-derived neurotrophic factor that promotes sympathetic innervation of adipose tissue. Binds to and initiates the activation of STK38 by releasing autoinhibitory intramolecular interactions within the kinase. Interaction with AGER after myocardial infarction may play a role in myocyte apoptosis by activating ERK1/2 and p53/TP53 signaling. Could assist ATAD3A cytoplasmic processing, preventing aggregation and favoring mitochondrial localization. May mediate calcium-dependent regulation on many physiological processes by interacting with other proteins, such as TPR-containing proteins, and modulating their activity. This chain is Protein S100-B, found in Homo sapiens (Human).